Here is a 600-residue protein sequence, read N- to C-terminus: CTP synthase (600 aa).

The 267-residue stretch at 304-570 (TIVLVGKYTH…IQSGEEVEWS (267 aa)) folds into the Glutamine amidotransferase type-1 domain. Catalysis depends on for GATase activity residues Cys403, His532, and Glu534.

It belongs to the CTP synthase family.

It catalyses the reaction UTP + L-glutamine + ATP + H2O = CTP + L-glutamate + ADP + phosphate + 2 H(+). It participates in pyrimidine metabolism; CTP biosynthesis via de novo pathway; CTP from UDP: step 2/2. In terms of biological role, catalyzes the ATP-dependent amination of UTP to CTP with either L-glutamine or ammonia as the source of nitrogen. In Schizosaccharomyces pombe (strain 972 / ATCC 24843) (Fission yeast), this protein is CTP synthase (ura7).